Consider the following 200-residue polypeptide: Superoxide dismutase [Fe] (200 aa).

Fe cation-binding residues include histidine 28, histidine 82, aspartate 165, and histidine 169.

Belongs to the iron/manganese superoxide dismutase family. As to quaternary structure, homodimer. The cofactor is Fe cation.

It catalyses the reaction 2 superoxide + 2 H(+) = H2O2 + O2. In terms of biological role, destroys superoxide anion radicals which are normally produced within the cells and which are toxic to biological systems. This Rhodobacter capsulatus (Rhodopseudomonas capsulata) protein is Superoxide dismutase [Fe] (sodB).